The primary structure comprises 253 residues: Serine/threonine-protein phosphatase 3 (253 aa).

Mn(2+) is required as a cofactor. Phosphorylated by YegI.

The catalysed reaction is O-phospho-L-seryl-[protein] + H2O = L-seryl-[protein] + phosphate. The enzyme catalyses O-phospho-L-threonyl-[protein] + H2O = L-threonyl-[protein] + phosphate. With respect to regulation, activity dramatically decreases in the presence of the general protein phosphatase inhibitor sodium phosphate. Slightly inhibited by sodium fluoride. Activity decreases in the presence of the metal chelator EDTA. In terms of biological role, PP2C-like phosphatase that can dephosphorylate YegI. In vitro, can hydrolyze p-nitrophenyl phosphate (pNPP) to p-nitrophenol. The sequence is that of Serine/threonine-protein phosphatase 3 from Escherichia coli (strain K12).